The primary structure comprises 187 residues: Basic helix-loop-helix transcription factor scleraxis (187 aa).

Disordered stretches follow at residues 21–83 (LSED…TNSV) and 140–163 (AFFH…QPKQ). Residues 34–43 (SDEKPFHLDA) are compositionally biased toward basic and acidic residues. Over residues 50–72 (AGKRRSGKKAGRLHREPRQRHTA) the composition is skewed to basic residues. In terms of domain architecture, bHLH spans 67-119 (RQRHTANARERDRTNSVNTAFTALRTLIPTEPADRKLSKIETLRLASSYISHL).

As to quaternary structure, efficient DNA binding requires dimerization with another bHLH protein. Dimerizes and binds the E-box consensus sequence with E12. In terms of tissue distribution, expressed in the intersomitic, the superficial proximomedial limb mesenchyme and the subectodermal mesenchyme.

It localises to the nucleus. Functionally, plays an early essential role in mesoderm formation, as well as a later role in formation of somite-derived chondrogenic lineages. The sequence is that of Basic helix-loop-helix transcription factor scleraxis (SCX) from Gallus gallus (Chicken).